The sequence spans 349 residues: uncharacterized protein (349 aa).

The THUMP domain occupies 51 to 160; that stretch reads NIIKENKNNL…QDESYISIFQ (110 aa).

This is an uncharacterized protein from Methanocaldococcus jannaschii (strain ATCC 43067 / DSM 2661 / JAL-1 / JCM 10045 / NBRC 100440) (Methanococcus jannaschii).